The sequence spans 146 residues: Universal stress protein MT1672 (146 aa).

It belongs to the universal stress protein A family.

The protein is Universal stress protein MT1672 of Mycobacterium tuberculosis (strain CDC 1551 / Oshkosh).